Here is a 393-residue protein sequence, read N- to C-terminus: Ninja-family protein 1 (393 aa).

Disordered regions lie at residues 1–27 (MEGF…PGQL) and 155–200 (NDDW…KEMN). Over residues 156 to 170 (DDWKKRKEAQSLKRL) the composition is skewed to basic and acidic residues.

It belongs to the Ninja family.

It is found in the nucleus. This is Ninja-family protein 1 from Zea mays (Maize).